A 300-amino-acid chain; its full sequence is Spermine synthase SPE4 (300 aa).

The residue at position 5 (Ser-5) is a Phosphoserine. The PABS domain maps to 12-255 (DGWFREINDK…GQLGLIVCSN (244 aa)). S-adenosyl 3-(methylsulfanyl)propylamine contacts are provided by residues Gln-44, Asp-99, Glu-119, and 151 to 152 (DG). Asp-174 serves as the catalytic Proton acceptor. Asp-177 lines the spermidine pocket.

This sequence belongs to the spermidine/spermine synthase family.

It catalyses the reaction S-adenosyl 3-(methylsulfanyl)propylamine + spermidine = spermine + S-methyl-5'-thioadenosine + H(+). The protein operates within amine and polyamine biosynthesis; spermine biosynthesis; spermine from spermidine: step 1/1. In Saccharomyces cerevisiae (strain ATCC 204508 / S288c) (Baker's yeast), this protein is Spermine synthase SPE4 (SPE4).